Reading from the N-terminus, the 332-residue chain is tRNA-dihydrouridine synthase B (332 aa).

Residues 16–18 and Gln-70 contribute to the FMN site; that span reads PMA. Cys-100 (proton donor) is an active-site residue. FMN is bound by residues Lys-139, 200–202, and 224–225; these read NGD and GR.

Belongs to the Dus family. DusB subfamily. The cofactor is FMN.

It carries out the reaction a 5,6-dihydrouridine in tRNA + NAD(+) = a uridine in tRNA + NADH + H(+). It catalyses the reaction a 5,6-dihydrouridine in tRNA + NADP(+) = a uridine in tRNA + NADPH + H(+). Catalyzes the synthesis of 5,6-dihydrouridine (D), a modified base found in the D-loop of most tRNAs, via the reduction of the C5-C6 double bond in target uridines. This is tRNA-dihydrouridine synthase B from Pasteurella multocida (strain Pm70).